Reading from the N-terminus, the 109-residue chain is Protein reprimo (109 aa).

2 N-linked (GlcNAc...) asparagine glycosylation sites follow: asparagine 7 and asparagine 18. The chain crosses the membrane as a helical span at residues 56–76 (VVQIAVMCVLSLTVVFGIFFL). Position 98 is a phosphoserine (serine 98).

Belongs to the reprimo family.

It is found in the cytoplasm. The protein localises to the membrane. May be involved in the regulation of p53-dependent G2 arrest of the cell cycle. Seems to induce cell cycle arrest by inhibiting CDK1 activity and nuclear translocation of the CDC2 cyclin B1 complex. In Rattus norvegicus (Rat), this protein is Protein reprimo (Rprm).